A 28-amino-acid polypeptide reads, in one-letter code: Cyclotide vodo I1 (28 aa).

3 disulfide bridges follow: Cys-4–Cys-18, Cys-8–Cys-20, and Cys-13–Cys-25.

In terms of processing, this is a cyclic peptide. Contains 3 disulfide bonds.

Functionally, probably participates in a plant defense mechanism. In Viola odorata (Sweet violet), this protein is Cyclotide vodo I1.